The following is a 255-amino-acid chain: uncharacterized protein (255 aa).

An N-terminal signal peptide occupies residues 1-23; that stretch reads MKRLNKLVLYISFLILVISFTAG. Cys-24 carries N-palmitoyl cysteine lipidation. Cys-24 carries S-diacylglycerol cysteine lipidation.

Belongs to the staphylococcal tandem lipoprotein family.

Its subcellular location is the cell membrane. This is an uncharacterized protein from Staphylococcus aureus (strain N315).